Here is a 471-residue protein sequence, read N- to C-terminus: 3-isopropylmalate dehydratase large subunit (471 aa).

[4Fe-4S] cluster contacts are provided by C347, C409, and C412.

It belongs to the aconitase/IPM isomerase family. LeuC type 1 subfamily. As to quaternary structure, heterodimer of LeuC and LeuD. It depends on [4Fe-4S] cluster as a cofactor.

The enzyme catalyses (2R,3S)-3-isopropylmalate = (2S)-2-isopropylmalate. It participates in amino-acid biosynthesis; L-leucine biosynthesis; L-leucine from 3-methyl-2-oxobutanoate: step 2/4. In terms of biological role, catalyzes the isomerization between 2-isopropylmalate and 3-isopropylmalate, via the formation of 2-isopropylmaleate. The sequence is that of 3-isopropylmalate dehydratase large subunit from Buchnera aphidicola subsp. Rhopalosiphum padi.